We begin with the raw amino-acid sequence, 444 residues long: Argininosuccinate synthase (444 aa).

Residues 17–25 (AFSGGLDTS) and Ala-43 each bind ATP. Tyr-99 is a binding site for L-citrulline. ATP contacts are provided by Gly-129 and Thr-131. Residues Thr-131, Asn-135, and Asp-136 each contribute to the L-aspartate site. L-citrulline is bound at residue Asn-135. ATP is bound at residue Asp-136. L-citrulline-binding residues include Arg-139 and Ser-192. Residue Asp-194 coordinates ATP. Thr-201, Glu-203, and Glu-280 together coordinate L-citrulline.

The protein belongs to the argininosuccinate synthase family. Type 2 subfamily. In terms of assembly, homotetramer.

Its subcellular location is the cytoplasm. The enzyme catalyses L-citrulline + L-aspartate + ATP = 2-(N(omega)-L-arginino)succinate + AMP + diphosphate + H(+). The protein operates within amino-acid biosynthesis; L-arginine biosynthesis; L-arginine from L-ornithine and carbamoyl phosphate: step 2/3. In Paraburkholderia phymatum (strain DSM 17167 / CIP 108236 / LMG 21445 / STM815) (Burkholderia phymatum), this protein is Argininosuccinate synthase.